Reading from the N-terminus, the 365-residue chain is Ribosomal RNA large subunit methyltransferase M (365 aa).

Residues S193, 226-229 (CPGG), D245, D265, and D282 each bind S-adenosyl-L-methionine. The active-site Proton acceptor is K311.

This sequence belongs to the class I-like SAM-binding methyltransferase superfamily. RNA methyltransferase RlmE family. RlmM subfamily. In terms of assembly, monomer.

The protein localises to the cytoplasm. The catalysed reaction is cytidine(2498) in 23S rRNA + S-adenosyl-L-methionine = 2'-O-methylcytidine(2498) in 23S rRNA + S-adenosyl-L-homocysteine + H(+). Functionally, catalyzes the 2'-O-methylation at nucleotide C2498 in 23S rRNA. The polypeptide is Ribosomal RNA large subunit methyltransferase M (Alteromonas mediterranea (strain DSM 17117 / CIP 110805 / LMG 28347 / Deep ecotype)).